The sequence spans 241 residues: Beta-nerve growth factor (241 aa).

Residues Met-1–Ala-18 form the signal peptide. A propeptide spanning residues Glu-19–Arg-121 is cleaved from the precursor. N-linked (GlcNAc...) asparagine glycosylation is found at Asn-69, Asn-114, and Asn-166. 3 disulfides stabilise this stretch: Cys-136–Cys-201, Cys-179–Cys-229, and Cys-189–Cys-231. Residues Tyr-173 and Lys-209 each coordinate a 1-acyl-sn-glycero-3-phospho-(1D-myo-inositol). Lys-209 contributes to the a 1-acyl-sn-glycero-3-phospho-L-serine binding site.

The protein belongs to the NGF-beta family. Homodimer. The homodimer interacts with a single NTRK1 chain. The homodimer interacts with a single NGFR chain. The NGF dimer interacts with a single SORCS2 chain (via extracellular domain). The NGF precursor (proNGF) binds to a receptor complex formed by SORT1 and NGFR, which leads to NGF endocytosis. Both mature NGF and the immature NGF precursor (proNGF) interact with SORCS2 and with the heterodimer formed by SORCS2 and NGFR (via extracellular domains). The NGF precursor (proNGF) has much higher affinity for SORCS2 than mature NGF. The NGF precursor (proNGF) has much higher affinity for SORT1 than mature NGF. Interacts with ADAM10 in a divalent cation-dependent manner. Interacts with SORCS3.

It is found in the secreted. The protein resides in the endosome lumen. Functionally, nerve growth factor is important for the development and maintenance of the sympathetic and sensory nervous systems. Extracellular ligand for the NTRK1 and NGFR receptors, activates cellular signaling cascades to regulate neuronal proliferation, differentiation and survival. The immature NGF precursor (proNGF) functions as a ligand for the heterodimeric receptor formed by SORCS2 and NGFR, and activates cellular signaling cascades that lead to inactivation of RAC1 and/or RAC2, reorganization of the actin cytoskeleton and neuronal growth cone collapse. In contrast to mature NGF, the precursor form (proNGF) promotes neuronal apoptosis (in vitro). Inhibits metalloproteinase-dependent proteolysis of platelet glycoprotein VI. Binds lysophosphatidylinositol and lysophosphatidylserine between the two chains of the homodimer. The lipid-bound form promotes histamine relase from mast cells, contrary to the lipid-free form. This Gorilla gorilla gorilla (Western lowland gorilla) protein is Beta-nerve growth factor (NGF).